An 810-amino-acid polypeptide reads, in one-letter code: Soluble starch synthase 2-3, chloroplastic/amyloplastic (810 aa).

The transit peptide at Met1–Leu16 directs the protein to the chloroplast. 2 disordered regions span residues Gly43–Ala265 and Glu281–Leu313. Positions Arg63–Ala83 are enriched in basic and acidic residues. Residues Gly84–Phe93 are compositionally biased toward acidic residues. The span at Arg102–Gly116 shows a compositional bias: basic residues. Low complexity predominate over residues Asp129–Ala148. Acidic residues predominate over residues Glu281–Ser310. ADP-alpha-D-glucose is bound at residue Lys333.

It belongs to the glycosyltransferase 1 family. Bacterial/plant glycogen synthase subfamily. Expressed most exclusively in endosperm.

Its subcellular location is the plastid. The protein localises to the amyloplast. It is found in the chloroplast. The enzyme catalyses [(1-&gt;4)-alpha-D-glucosyl](n) + ADP-alpha-D-glucose = [(1-&gt;4)-alpha-D-glucosyl](n+1) + ADP + H(+). It participates in glycan biosynthesis; starch biosynthesis. Functionally, plays an important role during endosperm starch synthesis. Determines the type of amylopectin structure of starch grain. Synthesizes long B1 amylopectin chains by elongating short A and B1 chains, independently of the other soluble starch synthases. Barely active in japonica subspecies. This chain is Soluble starch synthase 2-3, chloroplastic/amyloplastic (SSII-3), found in Oryza sativa subsp. indica (Rice).